We begin with the raw amino-acid sequence, 239 residues long: 2-C-methyl-D-erythritol 4-phosphate cytidylyltransferase (239 aa).

Belongs to the IspD/TarI cytidylyltransferase family. IspD subfamily. In terms of assembly, homodimer.

It carries out the reaction 2-C-methyl-D-erythritol 4-phosphate + CTP + H(+) = 4-CDP-2-C-methyl-D-erythritol + diphosphate. The protein operates within isoprenoid biosynthesis; isopentenyl diphosphate biosynthesis via DXP pathway; isopentenyl diphosphate from 1-deoxy-D-xylulose 5-phosphate: step 2/6. Catalyzes the formation of 4-diphosphocytidyl-2-C-methyl-D-erythritol from CTP and 2-C-methyl-D-erythritol 4-phosphate (MEP). In Sodalis glossinidius (strain morsitans), this protein is 2-C-methyl-D-erythritol 4-phosphate cytidylyltransferase.